The primary structure comprises 159 residues: 2-C-methyl-D-erythritol 2,4-cyclodiphosphate synthase (159 aa).

A divalent metal cation is bound by residues aspartate 8 and histidine 10. 4-CDP-2-C-methyl-D-erythritol 2-phosphate contacts are provided by residues 8–10 and 34–35; these read DVH and HS. A divalent metal cation is bound at residue histidine 42. 4-CDP-2-C-methyl-D-erythritol 2-phosphate is bound by residues 56–58, 61–65, 100–106, 132–135, phenylalanine 139, and arginine 142; these read DIG, FPDTD, AQAPRML, and TTTE.

It belongs to the IspF family. As to quaternary structure, homotrimer. Requires a divalent metal cation as cofactor.

It catalyses the reaction 4-CDP-2-C-methyl-D-erythritol 2-phosphate = 2-C-methyl-D-erythritol 2,4-cyclic diphosphate + CMP. It participates in isoprenoid biosynthesis; isopentenyl diphosphate biosynthesis via DXP pathway; isopentenyl diphosphate from 1-deoxy-D-xylulose 5-phosphate: step 4/6. Involved in the biosynthesis of isopentenyl diphosphate (IPP) and dimethylallyl diphosphate (DMAPP), two major building blocks of isoprenoid compounds. Catalyzes the conversion of 4-diphosphocytidyl-2-C-methyl-D-erythritol 2-phosphate (CDP-ME2P) to 2-C-methyl-D-erythritol 2,4-cyclodiphosphate (ME-CPP) with a corresponding release of cytidine 5-monophosphate (CMP). This is 2-C-methyl-D-erythritol 2,4-cyclodiphosphate synthase from Escherichia coli O6:K15:H31 (strain 536 / UPEC).